Reading from the N-terminus, the 359-residue chain is Fructose-bisphosphate aldolase (359 aa).

Thr-11 is subject to Phosphothreonine. Lys-27 is covalently cross-linked (Glycyl lysine isopeptide (Lys-Gly) (interchain with G-Cter in ubiquitin)). 2 positions are modified to phosphoserine: Ser-56 and Ser-63. Ser-63 lines the D-glyceraldehyde 3-phosphate pocket. Residue Lys-73 forms a Glycyl lysine isopeptide (Lys-Gly) (interchain with G-Cter in ubiquitin) linkage. Phosphoserine is present on residues Ser-76 and Ser-83. Lys-85 is covalently cross-linked (Glycyl lysine isopeptide (Lys-Gly) (interchain with G-Cter in ubiquitin)). Ser-96 is modified (phosphoserine). Residue Asp-110 is the Proton donor of the active site. The Zn(2+) site is built by His-111 and Asp-145. Residue Ser-147 is modified to Phosphoserine. Phosphothreonine is present on Thr-150. Residue Glu-175 coordinates Zn(2+). Position 179 is a phosphothreonine (Thr-179). His-227 contributes to the Zn(2+) binding site. Residue Gly-228 participates in dihydroxyacetone phosphate binding. His-265 serves as a coordination point for Zn(2+). Residues Gly-266–Ser-268 and Asn-287–Thr-290 contribute to the dihydroxyacetone phosphate site. Ser-268 carries the phosphoserine modification. A Phosphothreonine modification is found at Thr-290. A Glycyl lysine isopeptide (Lys-Gly) (interchain with G-Cter in ubiquitin) cross-link involves residue Lys-308. Tyr-310 carries the post-translational modification Phosphotyrosine. Residue Ser-313 is modified to Phosphoserine.

The protein belongs to the class II fructose-bisphosphate aldolase family. In terms of assembly, homodimer. Zn(2+) serves as cofactor.

It carries out the reaction beta-D-fructose 1,6-bisphosphate = D-glyceraldehyde 3-phosphate + dihydroxyacetone phosphate. It functions in the pathway carbohydrate degradation; glycolysis; D-glyceraldehyde 3-phosphate and glycerone phosphate from D-glucose: step 4/4. Functionally, catalyzes the aldol condensation of dihydroxyacetone phosphate (DHAP or glycerone-phosphate) with glyceraldehyde 3-phosphate (G3P) to form fructose 1,6-bisphosphate (FBP) in gluconeogenesis and the reverse reaction in glycolysis. The polypeptide is Fructose-bisphosphate aldolase (FBA1) (Saccharomyces cerevisiae (strain ATCC 204508 / S288c) (Baker's yeast)).